Consider the following 399-residue polypeptide: L-methionine gamma-lyase (399 aa).

Pyridoxal 5'-phosphate-binding positions include 59-61 and 89-90; these read YTR and GI. Tyr114 provides a ligand contact to substrate. 209–211 serves as a coordination point for pyridoxal 5'-phosphate; sequence SAT. Lys212 carries the post-translational modification N6-(pyridoxal phosphate)lysine. A substrate-binding site is contributed by Arg376.

The protein belongs to the trans-sulfuration enzymes family. L-methionine gamma-lyase subfamily. As to quaternary structure, homotetramer; dimer of active dimers. It depends on pyridoxal 5'-phosphate as a cofactor.

The catalysed reaction is L-methionine + H2O = methanethiol + 2-oxobutanoate + NH4(+). The enzyme catalyses L-homocysteine + H2O = 2-oxobutanoate + hydrogen sulfide + NH4(+) + H(+). Its function is as follows. Catalyzes the alpha,gamma-elimination of L-methionine to produce methanethiol, 2-oxobutanoate and ammonia; methanethiol (methyl mercaptan) is considered to be one of the main causes of the oral malodor in periodontal disease and may also play a role in the pathogenicity of P.gingivalis in that disease. Is also able to catalyze the alpha,gamma-elimination of L-homocysteine. This chain is L-methionine gamma-lyase, found in Porphyromonas gingivalis (strain ATCC BAA-308 / W83).